A 363-amino-acid polypeptide reads, in one-letter code: Fructose-1,6-bisphosphatase 1 (363 aa).

An N-acetylvaline modification is found at Val-2. Residues Val-18–Gly-22 and Thr-28–Thr-32 each bind AMP. Mg(2+) contacts are provided by Asp-69 and Glu-98. Lys-113–Tyr-114 lines the AMP pocket. The Mg(2+) site is built by Asp-119, Leu-121, and Asp-122. Residue Asp-122–Ser-125 coordinates substrate. Arg-141 contributes to the AMP binding site. Residue Lys-151 is modified to N6-succinyllysine. Residues Asn-213 to Tyr-216, Arg-244 to Met-249, Tyr-265, and Lys-275 to Arg-277 contribute to the substrate site. 3 positions are modified to phosphotyrosine: Tyr-216, Tyr-245, and Tyr-265. Glu-281 lines the Mg(2+) pocket. A phosphoserine mark is found at Ser-339 and Ser-353.

This sequence belongs to the FBPase class 1 family. In terms of assembly, homotetramer. Mg(2+) serves as cofactor.

The catalysed reaction is beta-D-fructose 1,6-bisphosphate + H2O = beta-D-fructose 6-phosphate + phosphate. It participates in carbohydrate biosynthesis; gluconeogenesis. Subject to complex allosteric regulation. The enzyme can assume an active R-state, or an inactive T-state. Intermediate conformations may exist. AMP acts as an allosteric inhibitor. AMP binding affects the turnover of bound substrate and not the affinity for substrate. Fructose 2,6-bisphosphate acts as a competitive inhibitor. Fructose 2,6-bisphosphate and AMP have synergistic effects. Its function is as follows. Catalyzes the hydrolysis of fructose 1,6-bisphosphate to fructose 6-phosphate in the presence of divalent cations, acting as a rate-limiting enzyme in gluconeogenesis. Plays a role in regulating glucose sensing and insulin secretion of pancreatic beta-cells. Appears to modulate glycerol gluconeogenesis in liver. Important regulator of appetite and adiposity; increased expression of the protein in liver after nutrient excess increases circulating satiety hormones and reduces appetite-stimulating neuropeptides and thus seems to provide a feedback mechanism to limit weight gain. The sequence is that of Fructose-1,6-bisphosphatase 1 (Fbp1) from Rattus norvegicus (Rat).